A 330-amino-acid polypeptide reads, in one-letter code: Src kinase-associated phosphoprotein 2-A (330 aa).

The disordered stretch occupies residues 53-77 (QDFQDKAETDDQEENDGFSLPPDAV). A PH domain is found at 105–208 (DYLRAGYLEK…WINVIMNARG (104 aa)). A disordered region spans residues 228 to 261 (SHEEDIYEELPEESEKPVTGSETPKATPVPVNNT). Residues 247-261 (GSETPKATPVPVNNT) show a composition bias toward polar residues. Residues 268–329 (DYANFYRGLW…PKAYIIEMYD (62 aa)) enclose the SH3 domain.

Belongs to the SKAP family. Post-translationally, phosphorylated on tyrosines.

It is found in the cytoplasm. Its function is as follows. May be involved in B-cell and macrophage adhesion processes. May play a role in src signaling pathway. The sequence is that of Src kinase-associated phosphoprotein 2-A (skap2-a) from Xenopus laevis (African clawed frog).